Consider the following 394-residue polypeptide: Probable glycosyltransferase FCK3 (394 aa).

Belongs to the afumC glycosyltransferase family.

It functions in the pathway secondary metabolite biosynthesis. Probable glycosyl transferase; part of the gene cluster that mediates the biosynthesis of cytokinins such as fusatin, fusatinic acids or 8-oxofusatin, known for their growth promoting and anti-senescence activities toward host plants. FCK1 is a bifunctional enzyme that performs the first steps in the biosynthesis of Fusarium cytokinins. It first condenses adenosine monophosphate (AMP) with dimethylallyl diphosphate (DMAPP) to yield isoprenyl adenosine monophosphate. It then catalyzes the removal of the phosphoribose to produce isopentenylaldehyde. The cytochrome P450 monooxygenase then converts isopentenylaldehyde to trans-zeatin. A condensation step converts trans-zeatin to fusatin which is further modified to produce fusatinic acid. The mechanism for oxidation of fusatin to fusatinic acid remains unknown. 8-oxofusatin could be produced through several pathways, via direct oxygenation of fusatin, or via the 8-oxo-pentenyladenine intermediate which itself must arise from either the prenylation of 8-oxo-AMP by FCK1 and/or oxygenation of isopentenylaldehyde. Both the FCK3 and FCK4 enzymes act downstream of the identified cytokinins to produce yet unidentified compounds. This Fusarium pseudograminearum (strain CS3096) (Wheat and barley crown-rot fungus) protein is Probable glycosyltransferase FCK3.